The primary structure comprises 344 residues: Uroporphyrinogen decarboxylase (344 aa).

Residues 26–30 (RQAGR), aspartate 76, tyrosine 151, serine 206, and histidine 321 contribute to the substrate site.

It belongs to the uroporphyrinogen decarboxylase family. Homodimer.

It is found in the cytoplasm. The enzyme catalyses uroporphyrinogen III + 4 H(+) = coproporphyrinogen III + 4 CO2. It participates in porphyrin-containing compound metabolism; protoporphyrin-IX biosynthesis; coproporphyrinogen-III from 5-aminolevulinate: step 4/4. In terms of biological role, catalyzes the decarboxylation of four acetate groups of uroporphyrinogen-III to yield coproporphyrinogen-III. The sequence is that of Uroporphyrinogen decarboxylase from Sinorhizobium fredii (strain NBRC 101917 / NGR234).